Reading from the N-terminus, the 556-residue chain is MQREYDYIIIGAGSAGNVLAARLTEDPGVTVLLLEAGGPDYRLDFRTQMPAALAFPLQGRRYNWAYETEPEPYMDNRRMECGRGKGLGGSSLINGMCYIRGNALDFDHWAKRPGLEDWSYRDVLPYFRKAETRDIGANDYHGGDGPVSVATPKNDNNVLFHAMVEAGVQAGYPRTDDLNGYQQEGFGPMDRTVTPRGRRASTARGYLDMAKPRDGLHIVTHATTDRILFAGKRAIGVHYLVGNSSEGIDAHARREVLVCAGAIASPQLLQRSGVGAPDLLRALDVQLVHDLPGVGQNLQDHLEVYIQYACTKPVSLYPALQWWNQPAIGAEWLFAGTGTGASNQFEAGGFIRTREEFDWPNIQYHFLPVAINYNGSNAVKEHGFQAHVGSMRTPSRGRVHAKSRDPRQHPSILFNYQSTDQDWQEFRDAIRITREIIAQPALDPYRGREISPSADCKTDAELDAFVRSRAETAYHPSCSCAMGTDDMAVVDGQGRVHGMEGLRVIDASIMPRIITGNLNATTIMIAEKIADRMRGRPPLPRSTADYYIAGDAPVRG.

FAD is bound at residue 6–35 (DYIIIGAGSAGNVLAARLTEDPGVTVLLLE). The active-site Proton acceptor is His475.

The protein belongs to the GMC oxidoreductase family. FAD serves as cofactor.

The enzyme catalyses choline + A = betaine aldehyde + AH2. It catalyses the reaction betaine aldehyde + NAD(+) + H2O = glycine betaine + NADH + 2 H(+). It participates in amine and polyamine biosynthesis; betaine biosynthesis via choline pathway; betaine aldehyde from choline (cytochrome c reductase route): step 1/1. Functionally, involved in the biosynthesis of the osmoprotectant glycine betaine. Catalyzes the oxidation of choline to betaine aldehyde and betaine aldehyde to glycine betaine at the same rate. This Xanthomonas euvesicatoria pv. vesicatoria (strain 85-10) (Xanthomonas campestris pv. vesicatoria) protein is Oxygen-dependent choline dehydrogenase.